The primary structure comprises 198 residues: Beta-crystallin A1-2 (198 aa).

The N-terminal arm stretch occupies residues 1-13; that stretch reads MAQINPLPVPLGP. Beta/gamma crystallin 'Greek key' domains follow at residues 14–53 and 54–100; these read WKIT…KVEC and GAWI…RPIC. The segment at 101-106 is connecting peptide; it reads SANHIE. 2 consecutive Beta/gamma crystallin 'Greek key' domains span residues 107 to 148 and 149 to 197; these read SKLV…KVQC and GAWV…RRIQ.

It belongs to the beta/gamma-crystallin family. Homo/heterodimer, or complexes of higher-order. The structure of beta-crystallin oligomers seems to be stabilized through interactions between the N-terminal arms. In terms of processing, the N-terminus is blocked.

Its function is as follows. Crystallins are the dominant structural components of the vertebrate eye lens. The polypeptide is Beta-crystallin A1-2 (Aquarana catesbeiana (American bullfrog)).